We begin with the raw amino-acid sequence, 620 residues long: 1-deoxy-D-xylulose-5-phosphate synthase (620 aa).

Thiamine diphosphate is bound by residues histidine 80 and 121-123 (GHS). Aspartate 152 is a binding site for Mg(2+). Thiamine diphosphate is bound by residues 153–154 (GA), asparagine 181, tyrosine 288, and glutamate 370. Position 181 (asparagine 181) interacts with Mg(2+).

This sequence belongs to the transketolase family. DXPS subfamily. In terms of assembly, homodimer. Mg(2+) is required as a cofactor. Requires thiamine diphosphate as cofactor.

The enzyme catalyses D-glyceraldehyde 3-phosphate + pyruvate + H(+) = 1-deoxy-D-xylulose 5-phosphate + CO2. The protein operates within metabolic intermediate biosynthesis; 1-deoxy-D-xylulose 5-phosphate biosynthesis; 1-deoxy-D-xylulose 5-phosphate from D-glyceraldehyde 3-phosphate and pyruvate: step 1/1. In terms of biological role, catalyzes the acyloin condensation reaction between C atoms 2 and 3 of pyruvate and glyceraldehyde 3-phosphate to yield 1-deoxy-D-xylulose-5-phosphate (DXP). This is 1-deoxy-D-xylulose-5-phosphate synthase from Klebsiella pneumoniae (strain 342).